The primary structure comprises 151 residues: Probable calcium-binding protein CML31 (151 aa).

4 consecutive EF-hand domains span residues Ala-14–Glu-42, Val-44–Glu-79, Arg-84–Asp-119, and Gln-120–Ala-151. Ca(2+)-binding residues include Asp-20, Asp-22, Asp-24, Arg-26, Glu-31, Asp-57, Asp-59, Asp-61, and Glu-68. The Ca(2+) site is built by Asp-133, Asn-135, Asp-137, and Glu-144.

Its function is as follows. Potential calcium sensor. This is Probable calcium-binding protein CML31 (CML31) from Oryza sativa subsp. japonica (Rice).